Here is a 60-residue protein sequence, read N- to C-terminus: UPF0434 protein YcaR (60 aa).

This sequence belongs to the UPF0434 family.

In Salmonella arizonae (strain ATCC BAA-731 / CDC346-86 / RSK2980), this protein is UPF0434 protein YcaR.